The following is a 369-amino-acid chain: MRLEAIRYSPGSLQILDQLQLPEHCHYETLSSVQQAREAIRAMKVRGAPAIALVGCLSLAVELQAGAGGPGLAALVAFVRDQLSLLVAARPTAVNMARAARDLTHMAAREAELEGATEETVRERVIRFAEDMLEKDLKDNRSIGDLGARHLLEQTNPRGGKVTVLTHCNTGALATAGYGTALGVIRSLHEMGRLEHTFCTETRPYNQGARLTAFELVYEKIPATLITDSMAAAAMVHQGVSAVVVGADRVVANGDTANKIGTYQLAIVAKHHGIPFYVAAPSSSCDLRLETGKEIVIEERPSQELTDLNGVRIAAQGIRVWNPAFDVTPHELITGGIITELGVFAPEELRAALSATIFSEGQTLDSPQM.

Met-1 carries the N-acetylmethionine modification. An Omega-N-methylarginine modification is found at Arg-158. The active-site Proton donor is the Asp-248. Ser-366 carries the phosphoserine modification.

Belongs to the eIF-2B alpha/beta/delta subunits family. MtnA subfamily.

The protein localises to the cytoplasm. It is found in the nucleus. The catalysed reaction is 5-(methylsulfanyl)-alpha-D-ribose 1-phosphate = 5-(methylsulfanyl)-D-ribulose 1-phosphate. It participates in amino-acid biosynthesis; L-methionine biosynthesis via salvage pathway; L-methionine from S-methyl-5-thio-alpha-D-ribose 1-phosphate: step 1/6. Its function is as follows. Catalyzes the interconversion of methylthioribose-1-phosphate (MTR-1-P) into methylthioribulose-1-phosphate (MTRu-1-P). This Rattus norvegicus (Rat) protein is Methylthioribose-1-phosphate isomerase (Mri1).